The chain runs to 29 residues: Brevinin-2Rd (29 aa).

Residues Cys-23 and Cys-29 are joined by a disulfide bond.

In terms of tissue distribution, expressed by the skin glands.

It localises to the secreted. Functionally, antimicrobial peptide. This Pelophylax ridibundus (Marsh frog) protein is Brevinin-2Rd.